The chain runs to 177 residues: tRNA (cytidine(56)-2'-O)-methyltransferase (177 aa).

S-adenosyl-L-methionine is bound by residues leucine 84 and glycine 109–valine 113.

Belongs to the aTrm56 family. In terms of assembly, homodimer.

Its subcellular location is the cytoplasm. The enzyme catalyses cytidine(56) in tRNA + S-adenosyl-L-methionine = 2'-O-methylcytidine(56) in tRNA + S-adenosyl-L-homocysteine + H(+). Specifically catalyzes the AdoMet-dependent 2'-O-ribose methylation of cytidine at position 56 in tRNAs. The protein is tRNA (cytidine(56)-2'-O)-methyltransferase of Methanosarcina barkeri (strain Fusaro / DSM 804).